The following is a 163-amino-acid chain: Olfactory marker protein (163 aa).

At alanine 2 the chain carries N-acetylalanine.

The protein belongs to the olfactory marker protein family. Interacts with BEX1 and BEX2. In terms of tissue distribution, uniquely associated with mature olfactory receptor neurons.

Its subcellular location is the cytoplasm. Functionally, may act as a modulator of the olfactory signal-transduction cascade. The sequence is that of Olfactory marker protein (Omp) from Mus musculus (Mouse).